A 109-amino-acid chain; its full sequence is Small ribosomal subunit protein eS25 (109 aa).

The segment at 1-36 (MGGASKKPISTVEKRMKKMAEEQQKKQQKRATTKTG) is disordered. Residues 12 to 25 (VEKRMKKMAEEQQK) are compositionally biased toward basic and acidic residues.

Belongs to the eukaryotic ribosomal protein eS25 family.

This Sulfurisphaera tokodaii (strain DSM 16993 / JCM 10545 / NBRC 100140 / 7) (Sulfolobus tokodaii) protein is Small ribosomal subunit protein eS25 (rps25e).